A 1121-amino-acid polypeptide reads, in one-letter code: Piwi-like protein ergo-1 (1121 aa).

A compositionally biased stretch (gly residues) spans 1-14 (MSYNNGGGGGGGGY). The tract at residues 1–134 (MSYNNGGGGG…GNRGGGGGRV (134 aa)) is disordered. 2 stretches are compositionally biased toward basic and acidic residues: residues 15-29 (RNDR…DRQN) and 40-77 (YNDD…DRRG). Polar residues predominate over residues 99–112 (GSNQRNDNYGNNRG). A compositionally biased stretch (gly residues) spans 125-134 (GNRGGGGGRV). The region spanning 426 to 534 (VMTQILTKMT…MPLELVSYIV (109 aa)) is the PAZ domain. Positions 774–1081 (NVLKYLADNK…AAKRAKETLD (308 aa)) constitute a Piwi domain.

This sequence belongs to the argonaute family. Piwi subfamily. Interacts with rde-12. Interacts with rde-10. As to expression, highly expressed in the germline in hermaphrodites.

The protein localises to the cytoplasm. Functionally, argonaute protein required for gene silencing in the endogenous RNA interference (RNAi) pathway. Involved in the 26G RNAi pathway and associates with both unmethylated and methylated 26G small interfering RNAs (26G-siRNAs), which are a class of 26 nucleotide siRNAs that possess a guanine residue at the 5'-end. Associated 26G-siRNAs are methylated by the methyltransferase henn-1, which stabilizes the siRNAs. Association with 26G-siRNAs is required for the biogenesis of secondary 22G-siRNAs (a class of 22 nucleotide siRNAs that possess a triphosphorylated guanine residue at the 5'-end). May be involved in passenger strand cleavage of target 26G-siRNAs. The protein is Piwi-like protein ergo-1 of Caenorhabditis elegans.